Reading from the N-terminus, the 1933-residue chain is Protein TIC 214 (1933 aa).

The next 6 membrane-spanning stretches (helical) occupy residues 18–38 (IVNS…FSIG), 60–80 (ATTG…YAPL), 87–107 (PHTI…FYTD), 128–148 (FSIQ…HFIL), 176–196 (VGWL…LVWI), and 230–250 (IFYI…PAPL). Disordered stretches follow at residues 266–291 (AKGK…VGVG), 473–514 (KTKS…SRDN), 808–832 (THRE…AEDP), and 1066–1121 (ESFT…SSNA). Residues 278 to 289 (EEGDVEKEDEVG) show a composition bias toward acidic residues. Residues 476-487 (SLSPEKTSGDNL) are compositionally biased toward polar residues. 2 stretches are compositionally biased toward basic and acidic residues: residues 488–514 (ETSR…SRDN) and 819–832 (DEKN…AEDP). Positions 1066–1078 (ESFTQISSPSSTN) are enriched in polar residues. The span at 1105–1115 (KEKKKKKRSLK) shows a compositional bias: basic residues. The chain crosses the membrane as a helical span at residues 1135 to 1155 (LPVYLKLFIQRIYTGIFFSII). The disordered stretch occupies residues 1562 to 1642 (NADNEKNEKK…SAESTTKKVT (81 aa)). Basic and acidic residues predominate over residues 1564–1642 (DNEKNEKKEA…SAESTTKKVT (79 aa)).

It belongs to the TIC214 family. Part of the Tic complex.

It localises to the plastid. The protein localises to the chloroplast inner membrane. Functionally, involved in protein precursor import into chloroplasts. May be part of an intermediate translocation complex acting as a protein-conducting channel at the inner envelope. This Jasminum nudiflorum (Winter jasmine) protein is Protein TIC 214.